Reading from the N-terminus, the 372-residue chain is MKYDLIIIGSGSVGAAAGYYATRAGLKVLMTDAHMPPHQQGSHHGDTRLIRHAYGEGEKYVPLVLRAQTLWDELSTHNEEPIFVRSGVVNLGPADSAFLANVARSAQQWQLNVERLDATALMTRWPEIRVPDNYIGLFEADSGFLRSELAITTWLRLAREAGCAQLFNSPVSHIHHDDNGVTIETSEGSYHASKALISAGTWVKALVPELPVQPVRKVFAWFKADGRYSTKNRFPAFTGEMPNGDQYYGFPAENDELKIGKHNGGQLIQAPEERKPFAAVASDGAEAFPFLRNVLPGIGGCLHGAACTYDNSPDEDFIIDTLPGHENTLVITGLSGHGFKFAPVLGEIAADFALGKTPSFDLTPFRLSRFSQ.

4–34 (DLIIIGSGSVGAAAGYYATRAGLKVLMTDAH) contributes to the FAD binding site. Residue C307 is modified to S-8alpha-FAD cysteine.

The protein belongs to the MSOX/MTOX family. MTOX subfamily. As to quaternary structure, monomer. It depends on FAD as a cofactor.

It catalyses the reaction N(alpha)-methyl-L-tryptophan + O2 + H2O = L-tryptophan + formaldehyde + H2O2. Catalyzes the oxidative demethylation of N-methyl-L-tryptophan. This chain is N-methyl-L-tryptophan oxidase, found in Salmonella agona (strain SL483).